Here is a 658-residue protein sequence, read N- to C-terminus: Protein cueball (658 aa).

The Extracellular portion of the chain corresponds to 1 to 543 (MSGVTARMEN…SYCKNSFNRT (543 aa)). Asparagine 25 and asparagine 122 each carry an N-linked (GlcNAc...) asparagine glycan. LDL-receptor class B repeat units lie at residues 100–142 (RKLY…NHDL), 152–195 (RHLY…DHYS), and 196–241 (NRIY…NSRY). 3 consecutive EGF-like domains span residues 352–384 (EIPICNNYCVHGKCVIGRDNRPTCECDAKFEGE), 387–422 (DRSKCDGFCLNSGNCSFSDATATCACPKNFSGKRCE), and 458–495 (EEYTCNNYCLNDGKCVLNNETMLVECRCGAEYTGKRCE). 8 disulfide bridges follow: cysteine 356/cysteine 365, cysteine 360/cysteine 375, cysteine 391/cysteine 401, cysteine 395/cysteine 410, cysteine 412/cysteine 421, cysteine 462/cysteine 472, cysteine 466/cysteine 483, and cysteine 485/cysteine 494. Asparagine 400 and asparagine 415 each carry an N-linked (GlcNAc...) asparagine glycan. Asparagine 476 carries N-linked (GlcNAc...) asparagine glycosylation. Residue asparagine 541 is glycosylated (N-linked (GlcNAc...) asparagine). A helical membrane pass occupies residues 544 to 564 (VVYASLAFAASLFILMVILLI). Over 565–658 (VRRFYEEGRP…SCAGGDKNLP (94 aa)) the chain is Cytoplasmic.

It belongs to the cueball family.

It is found in the cell membrane. Functionally, has a role in spermatogenesis and oogenesis. This is Protein cueball from Culex quinquefasciatus (Southern house mosquito).